Here is a 114-residue protein sequence, read N- to C-terminus: Iron-sulfur cluster assembly protein CyaY (114 aa).

The protein belongs to the frataxin family.

In terms of biological role, involved in iron-sulfur (Fe-S) cluster assembly. May act as a regulator of Fe-S biogenesis. This chain is Iron-sulfur cluster assembly protein CyaY, found in Ralstonia pickettii (strain 12J).